The primary structure comprises 289 residues: MWAGCHPDAASLLRLLLAALLAAGALASGEYCHGWLDAQGVWRIGFQCPERFDGGDATICCGSCALRYCCSSADARLDQGGCDNDRQQGAGEPGRADKDGPDGSAVPIYVPFLIVGSVFVAFIVLGSLVAACCCRCLRPKQEPQLSRAPGGPRLVETIPMIPSASTSRGSSSRQSSTAASSSSSANSGARAPPTRSQTNCCLPEGTMNNVYVNMPTNFSVLNCQQATQIVPHQGQYLHPPFVGYTVQPDSVPLTPVPPFLDGLQTGYRQLQAPFPHTNSEQKMYPAVTV.

The signal sequence occupies residues 1–27 (MWAGCHPDAASLLRLLLAALLAAGALA). The Extracellular portion of the chain corresponds to 28-104 (SGEYCHGWLD…RADKDGPDGS (77 aa)). Residues 81–102 (GCDNDRQQGAGEPGRADKDGPD) form a disordered region. The helical transmembrane segment at 105-125 (AVPIYVPFLIVGSVFVAFIVL) threads the bilayer. The Cytoplasmic portion of the chain corresponds to 126-289 (GSLVAACCCR…EQKMYPAVTV (164 aa)). Positions 162-198 (PSASTSRGSSSRQSSTAASSSSSANSGARAPPTRSQT) are disordered. Over residues 163 to 191 (SASTSRGSSSRQSSTAASSSSSANSGARA) the composition is skewed to low complexity.

The protein belongs to the shisa family.

It is found in the endoplasmic reticulum membrane. In terms of biological role, plays an essential role in the maturation of presomitic mesoderm cells by individual attenuation of both FGF and WNT signaling. The chain is Protein shisa-2 homolog (SHISA2) from Bos taurus (Bovine).